The sequence spans 180 residues: Glycodelin (180 aa).

Positions 1 to 18 (MLCLLLTLGVALVCGVPA) are cleaved as a signal peptide. N-linked (GlcNAc...) (complex) asparagine glycans are attached at residues N46 and N81. 2 disulfide bridges follow: C84/C178 and C124/C137.

The protein belongs to the calycin superfamily. Lipocalin family. Homodimer. In terms of processing, four distinct glycoforms A, C, F and S arise from different N-linked oligosaccharide chains at amino acid residues Asn-46 and Asn-81. Glycodelin-A and -F are taken up by the cumulus cells in which partial deglycosylation takes place to produce glycodelin-C. In terms of tissue distribution, this protein is, the main protein synthesized and secreted in the endometrium from mid-luteal phase of the menstrual cycle and during the first semester of pregnancy. Glycodelin-A is expressed in amniotic fluid, endometrium/decidua and maternal serum (at protein level). Glycodelin-F is expressed in follicular fluid, luteinized granulosa cells and the oviduct (at protein level). Glycodelin-S is expressed in seminal plasma and seminal vesicles (at protein level). Glycodelin-C is detected in cumulus cells (at protein level), but cumulus cells do not synthesize Glycodelin-C but take up and convert glycodelin-A and -F vis glycan remodeling.

The protein resides in the secreted. Glycoprotein that regulates critical steps during fertilization and also has immunomonomodulatory effects. Four glycoforms, namely glycodelin-S, -A, -F and -C have been identified in reproductive tissues that differ in glycosylation and biological activity. Glycodelin-A has contraceptive and immunosuppressive activities. Glycodelin-C stimulates binding of spermatozoa to the zona pellucida. Glycodelin-F inhibits spermatozoa-zona pellucida binding and significantly suppresses progesterone-induced acrosome reaction of spermatozoa. Glycodelin-S in seminal plasma maintains the uncapacitated state of human spermatozoa. The chain is Glycodelin (PAEP) from Homo sapiens (Human).